A 180-amino-acid polypeptide reads, in one-letter code: ATP-dependent protease subunit HslV (180 aa).

T6 is a catalytic residue. 3 residues coordinate Na(+): A164, C167, and T170.

Belongs to the peptidase T1B family. HslV subfamily. As to quaternary structure, a double ring-shaped homohexamer of HslV is capped on each side by a ring-shaped HslU homohexamer. The assembly of the HslU/HslV complex is dependent on binding of ATP.

The protein resides in the cytoplasm. It catalyses the reaction ATP-dependent cleavage of peptide bonds with broad specificity.. With respect to regulation, allosterically activated by HslU binding. Its function is as follows. Protease subunit of a proteasome-like degradation complex believed to be a general protein degrading machinery. This Borrelia recurrentis (strain A1) protein is ATP-dependent protease subunit HslV.